We begin with the raw amino-acid sequence, 364 residues long: Histidinol-phosphate aminotransferase (364 aa).

N6-(pyridoxal phosphate)lysine is present on Lys-225.

The protein belongs to the class-II pyridoxal-phosphate-dependent aminotransferase family. Histidinol-phosphate aminotransferase subfamily. In terms of assembly, homodimer. Requires pyridoxal 5'-phosphate as cofactor.

The enzyme catalyses L-histidinol phosphate + 2-oxoglutarate = 3-(imidazol-4-yl)-2-oxopropyl phosphate + L-glutamate. Its pathway is amino-acid biosynthesis; L-histidine biosynthesis; L-histidine from 5-phospho-alpha-D-ribose 1-diphosphate: step 7/9. In Sulfurovum sp. (strain NBC37-1), this protein is Histidinol-phosphate aminotransferase.